Here is a 340-residue protein sequence, read N- to C-terminus: Glycerol-3-phosphate dehydrogenase [NAD(P)+] (340 aa).

NADPH contacts are provided by S14, F15, R35, and K108. Sn-glycerol 3-phosphate contacts are provided by K108 and G136. A140 provides a ligand contact to NADPH. Sn-glycerol 3-phosphate-binding residues include K191, D244, S254, R255, and N256. The active-site Proton acceptor is K191. Residue R255 coordinates NADPH. NADPH-binding residues include V279 and E281.

The protein belongs to the NAD-dependent glycerol-3-phosphate dehydrogenase family.

Its subcellular location is the cytoplasm. The enzyme catalyses sn-glycerol 3-phosphate + NAD(+) = dihydroxyacetone phosphate + NADH + H(+). The catalysed reaction is sn-glycerol 3-phosphate + NADP(+) = dihydroxyacetone phosphate + NADPH + H(+). Its pathway is membrane lipid metabolism; glycerophospholipid metabolism. Its function is as follows. Catalyzes the reduction of the glycolytic intermediate dihydroxyacetone phosphate (DHAP) to sn-glycerol 3-phosphate (G3P), the key precursor for phospholipid synthesis. This is Glycerol-3-phosphate dehydrogenase [NAD(P)+] from Azotobacter vinelandii (strain DJ / ATCC BAA-1303).